A 92-amino-acid chain; its full sequence is UPF0728 protein C10orf53 homolog (92 aa).

Belongs to the UPF0728 family.

The sequence is that of UPF0728 protein C10orf53 homolog from Danio rerio (Zebrafish).